We begin with the raw amino-acid sequence, 632 residues long: Transcription factor asR4 (632 aa).

The zn(2)-C6 fungal-type DNA-binding region spans 26–52 (CDSCNKSKTKCPGGNPCPLCQCSGIRC). Residues 101 to 111 (HISSNPSPVGS) are compositionally biased toward polar residues. 3 disordered regions span residues 101–129 (HISS…QQQQ), 270–311 (SNEY…GDGH), and 324–356 (TSAS…VPRT). The segment covering 112-129 (QSQQQQHPQQAGQQQQQQ) has biased composition (low complexity). Polar residues-rich tracts occupy residues 270–286 (SNEY…TTDD), 294–306 (PDSS…SSSV), and 329–340 (IVEQQSIPTSPV).

The protein resides in the nucleus. Its function is as follows. Transcription factor; part of the gene cluster that mediates the biosynthesis of xenovulene A, an unusual meroterpenoid that has potent inhibitory effects on the human gamma-aminobutyrate A (GABAA) benzodiazepine receptor. The protein is Transcription factor asR4 of Sarocladium schorii (Acremonium strictum (strain IMI 501407)).